The primary structure comprises 166 residues: Packaging efficiency factor P6 (166 aa).

The disordered stretch occupies residues 134-166 (ILPESAGDQQEAEPVPSVGDQQETAPRKRFRAI).

Heterodimer of P6 and P9; further multimerizes as hexamers of heterodimers. Part of the dodecameric portal complex that is composed of the packaging efficiency factor P6, the DNA packaging ATPase P9, and the internal heterododecamer P20/P22 which spans the virion inner membrane.

It localises to the virion. Functionally, together with the packaging ATPase P9, forms the external part of the portal vertex that is embeded in the capsid and which plays critical roles in genome packaging and genome ejection. Both proteins multimerize as a single ring-shaped heterdodecamer arranged around a central channel. The sequence is that of Packaging efficiency factor P6 (VI) from Acinetobacter calcoaceticus (Arthrobacter siderocapsulatus).